Reading from the N-terminus, the 736-residue chain is Sulfate transporter (736 aa).

The segment at 1 to 28 is disordered; sequence MSSESKEPHVLSPKDSFEGNDRYSPPSR. Phosphoserine is present on residues Ser12 and Ser16. The next 2 membrane-spanning stretches (helical) occupy residues 114 to 134 and 139 to 159; these read VMSG…YSLL and PIYG…LGTS. Residues Asn201 and Asn207 are each glycosylated (N-linked (GlcNAc...) asparagine). The next 6 helical transmembrane spans lie at 229-249, 257-277, 380-400, 422-442, 457-477, and 526-546; these read FLAG…VSVY, GFVT…LLGL, LIPS…AITV, AIGF…SAAL, LSGV…APLF, and LIST…CVIL. Residues 570–721 form the STAS domain; it reads AYKNLQARPG…YSVYEAMAFA (152 aa).

This sequence belongs to the SLC26A/SulP transporter (TC 2.A.53) family. N-glycosylated.

It is found in the cell membrane. The protein localises to the apical cell membrane. The enzyme catalyses oxalate(in) + sulfate(out) = oxalate(out) + sulfate(in). It catalyses the reaction sulfate(out) + 2 chloride(in) = sulfate(in) + 2 chloride(out). The catalysed reaction is oxalate(out) + 2 chloride(in) = oxalate(in) + 2 chloride(out). It carries out the reaction bromide(in) + chloride(out) = bromide(out) + chloride(in). The enzyme catalyses nitrate(in) + chloride(out) = nitrate(out) + chloride(in). It catalyses the reaction iodide(in) + chloride(out) = iodide(out) + chloride(in). Its function is as follows. Sulfate transporter which mediates sulfate uptake into chondrocytes in order to maintain adequate sulfation of proteoglycans which is needed for cartilage development. Mediates electroneutral anion exchange of sulfate ions for oxalate ions, sulfate and oxalate ions for chloride and/or hydroxyl ions and chloride ions for bromide, iodide and nitrate ions. The coupling of sulfate transport to both hydroxyl and chloride ions likely serves to ensure transport at both acidic pH when most sulfate uptake is mediated by sulfate-hydroxide exchange and alkaline pH when most sulfate uptake is mediated by sulfate-chloride exchange. Essential for chondrocyte proliferation, differentiation and cell size expansion. This is Sulfate transporter (SLC26A2) from Equus caballus (Horse).